A 129-amino-acid chain; its full sequence is MAREATRIRRRERKNITSGIVHVNSSFNNTMVTITDAQGNTISWSSSGVMNFKGSRKSTPYAAQMAAEDAAKKAKEHGLQTVEVRVRGPGSGRESALRALQAAGLTVTAINDTTPIPHNGCRPPKRRRV.

It belongs to the universal ribosomal protein uS11 family. As to quaternary structure, part of the 30S ribosomal subunit. Interacts with proteins S7 and S18. Binds to IF-3.

Its function is as follows. Located on the platform of the 30S subunit, it bridges several disparate RNA helices of the 16S rRNA. Forms part of the Shine-Dalgarno cleft in the 70S ribosome. The sequence is that of Small ribosomal subunit protein uS11 from Hyphomonas neptunium (strain ATCC 15444).